The chain runs to 244 residues: LexA repressor (244 aa).

Residues 1 to 24 (MSDSSDTTVDGASDGASDGASGAD) are disordered. The span at 10 to 24 (DGASDGASDGASGAD) shows a compositional bias: low complexity. Positions 58-78 (IREIGDAVGLTSTSSVAHQLR) form a DNA-binding region, H-T-H motif. Residues Ser-168 and Lys-205 each act as for autocatalytic cleavage activity in the active site.

This sequence belongs to the peptidase S24 family. As to quaternary structure, homodimer.

The enzyme catalyses Hydrolysis of Ala-|-Gly bond in repressor LexA.. Functionally, represses a number of genes involved in the response to DNA damage (SOS response), including recA and lexA. In the presence of single-stranded DNA, RecA interacts with LexA causing an autocatalytic cleavage which disrupts the DNA-binding part of LexA, leading to derepression of the SOS regulon and eventually DNA repair. This is LexA repressor from Mycobacterium marinum (strain ATCC BAA-535 / M).